A 300-amino-acid chain; its full sequence is Transcription factor Sox-3 (300 aa).

The tract at residues 1-35 (MYNMMETEIKSPIPQSNTGSVTGGKNNSANDQDRV) is disordered. A compositionally biased stretch (polar residues) spans 13-30 (IPQSNTGSVTGGKNNSAN). A DNA-binding region (HMG box) is located at residues 35 to 103 (VKRPMNAFMV…MHMKEHPDYK (69 aa)). Serine 235 carries the phosphoserine modification. The 9aaTAD signature appears at 251–262 (DLRDMISMYLPP).

It is found in the nucleus. Functionally, transcriptional activator. In Danio rerio (Zebrafish), this protein is Transcription factor Sox-3.